Reading from the N-terminus, the 489-residue chain is 3-octaprenyl-4-hydroxybenzoate carboxy-lyase (489 aa).

A Mn(2+)-binding site is contributed by asparagine 172. Prenylated FMN is bound by residues 175 to 177 (IYR), 189 to 191 (RWL), and 194 to 195 (RG). Mn(2+) is bound at residue glutamate 238. The Proton donor role is filled by aspartate 287.

This sequence belongs to the UbiD family. Homohexamer. The cofactor is prenylated FMN. Mn(2+) serves as cofactor.

The protein localises to the cell membrane. It catalyses the reaction a 4-hydroxy-3-(all-trans-polyprenyl)benzoate + H(+) = a 2-(all-trans-polyprenyl)phenol + CO2. The protein operates within cofactor biosynthesis; ubiquinone biosynthesis. In terms of biological role, catalyzes the decarboxylation of 3-octaprenyl-4-hydroxy benzoate to 2-octaprenylphenol, an intermediate step in ubiquinone biosynthesis. This is 3-octaprenyl-4-hydroxybenzoate carboxy-lyase from Klebsiella pneumoniae (strain 342).